Here is a 64-residue protein sequence, read N- to C-terminus: Potassium channel toxin kappa-KTx 3.1 (64 aa).

The N-terminal stretch at 1 to 26 is a signal peptide; it reads MKSTLMTASVLILVLLSIVDYASVYA. Residues 27–36 constitute a propeptide that is removed on maturation; that stretch reads EFIDSEISLE. Disulfide bonds link Cys43–Cys61 and Cys47–Cys57.

This sequence belongs to the short scorpion toxin superfamily. Potassium channel inhibitor kappa-KTx family. Kappa-KTx 3 subfamily. Expressed by the venom gland.

It localises to the secreted. Potassium channel inhibitor (Kv). This Heterometrus petersii (Asian forest scorpion) protein is Potassium channel toxin kappa-KTx 3.1.